We begin with the raw amino-acid sequence, 115 residues long: MSNQGKDSFKAYSYFCPCGQLFLTIHVSLTRLPQRQLDKRHVVDEKLNHIAHFSTGNKYYITRSDGGYEQRIQLLCRRCTLECAYALEAAPGYIYVDPTLVNEKPVTVSVSNLKE.

The protein belongs to the STEEP1 family.

Its function is as follows. May stimulate membrane curvature formation and subsequent endoplasmic reticulum exit site (ERES) establishment. This Schizosaccharomyces pombe (strain 972 / ATCC 24843) (Fission yeast) protein is ER exit protein.